A 218-amino-acid chain; its full sequence is Nucleoid occlusion factor SlmA (218 aa).

Positions 30-90 constitute an HTH tetR-type domain; the sequence is ERRQQVLTVL…ALIEHIESTL (61 aa). A DNA-binding region (H-T-H motif) is located at residues 53–72; it reads TTARLAKEVGVSEAALYRYF.

Belongs to the nucleoid occlusion factor SlmA family. As to quaternary structure, homodimer. Interacts with FtsZ.

The protein resides in the cytoplasm. It is found in the nucleoid. Its function is as follows. Required for nucleoid occlusion (NO) phenomenon, which prevents Z-ring formation and cell division over the nucleoid. Acts as a DNA-associated cell division inhibitor that binds simultaneously chromosomal DNA and FtsZ, and disrupts the assembly of FtsZ polymers. SlmA-DNA-binding sequences (SBS) are dispersed on non-Ter regions of the chromosome, preventing FtsZ polymerization at these regions. The protein is Nucleoid occlusion factor SlmA of Haemophilus influenzae (strain PittGG).